Here is a 341-residue protein sequence, read N- to C-terminus: Hyaluronan and proteoglycan link protein 2 (341 aa).

An N-terminal signal peptide occupies residues 1–27 (MPSRIPLPAFCCFLLPWAFTSFHKALG). One can recognise an Ig-like V-type domain in the interval 35-143 (PHYLLPPIHE…GIEDESVALT (109 aa)). Intrachain disulfides connect cysteine 58-cysteine 129, cysteine 171-cysteine 241, cysteine 195-cysteine 216, cysteine 266-cysteine 337, and cysteine 291-cysteine 312. Link domains lie at 149 to 243 (VVFP…FCFT) and 246 to 339 (LAGQ…YCYA).

Belongs to the HAPLN family. Brain. Predominantly expressed by neurons. Colocalizes with versican V2 in developing and adult cerebellar white matter and at the nodes of Ranvier.

The protein resides in the secreted. It is found in the extracellular space. Its subcellular location is the extracellular matrix. Its function is as follows. Mediates a firm binding of versican V2 to hyaluronic acid. May play a pivotal role in the formation of the hyaluronan-associated matrix in the central nervous system (CNS) which facilitates neuronal conduction and general structural stabilization. Binds to hyaluronic acid. This is Hyaluronan and proteoglycan link protein 2 (Hapln2) from Mus musculus (Mouse).